The sequence spans 334 residues: GTP 3',8-cyclase (334 aa).

Residues 13–239 form the Radical SAM core domain; sequence RFHRKFYYLR…KVKAVNDGPA (227 aa). R22 contacts GTP. C29 and C33 together coordinate [4Fe-4S] cluster. Y35 contacts S-adenosyl-L-methionine. Residue C36 coordinates [4Fe-4S] cluster. R73 contacts GTP. G77 is a binding site for S-adenosyl-L-methionine. Position 104 (T104) interacts with GTP. S128 is a binding site for S-adenosyl-L-methionine. Residue K165 participates in GTP binding. M199 contributes to the S-adenosyl-L-methionine binding site. [4Fe-4S] cluster contacts are provided by C262 and C265. Residue 267 to 269 participates in GTP binding; it reads RLR. C279 serves as a coordination point for [4Fe-4S] cluster.

This sequence belongs to the radical SAM superfamily. MoaA family. Monomer and homodimer. [4Fe-4S] cluster serves as cofactor.

It catalyses the reaction GTP + AH2 + S-adenosyl-L-methionine = (8S)-3',8-cyclo-7,8-dihydroguanosine 5'-triphosphate + 5'-deoxyadenosine + L-methionine + A + H(+). It participates in cofactor biosynthesis; molybdopterin biosynthesis. Its function is as follows. Catalyzes the cyclization of GTP to (8S)-3',8-cyclo-7,8-dihydroguanosine 5'-triphosphate. The chain is GTP 3',8-cyclase from Vibrio atlanticus (strain LGP32) (Vibrio splendidus (strain Mel32)).